The primary structure comprises 305 residues: Dermonecrotic toxin LiSicTox-alphaII1 (305 aa).

The N-terminal stretch at methionine 1–glycine 18 is a signal peptide. Positions alanine 19–arginine 26 are excised as a propeptide. The active site involves histidine 38. Residues glutamate 58 and aspartate 60 each contribute to the Mg(2+) site. The active-site Nucleophile is the histidine 74. 2 disulfides stabilise this stretch: cysteine 78–cysteine 84 and cysteine 80–cysteine 223. Aspartate 118 contacts Mg(2+).

This sequence belongs to the arthropod phospholipase D family. Class II subfamily. Class IIa sub-subfamily. Mg(2+) is required as a cofactor. In terms of tissue distribution, expressed by the venom gland.

It localises to the secreted. The enzyme catalyses an N-(acyl)-sphingosylphosphocholine = an N-(acyl)-sphingosyl-1,3-cyclic phosphate + choline. It catalyses the reaction an N-(acyl)-sphingosylphosphoethanolamine = an N-(acyl)-sphingosyl-1,3-cyclic phosphate + ethanolamine. The catalysed reaction is a 1-acyl-sn-glycero-3-phosphocholine = a 1-acyl-sn-glycero-2,3-cyclic phosphate + choline. It carries out the reaction a 1-acyl-sn-glycero-3-phosphoethanolamine = a 1-acyl-sn-glycero-2,3-cyclic phosphate + ethanolamine. Dermonecrotic toxins cleave the phosphodiester linkage between the phosphate and headgroup of certain phospholipids (sphingolipid and lysolipid substrates), forming an alcohol (often choline) and a cyclic phosphate. This toxin acts on sphingomyelin (SM) wih high activity. It may also act on ceramide phosphoethanolamine (CPE), lysophosphatidylcholine (LPC) and lysophosphatidylethanolamine (LPE), but not on lysophosphatidylserine (LPS), and lysophosphatidylglycerol (LPG). It acts by transphosphatidylation, releasing exclusively cyclic phosphate products as second products. Shows high hemolytic activity. Causes dermonecrosis, induces inflammatory response, platelet aggregation and increases vessel permeability. Shows no lethality when injected at higher dose into mice. May cause complement-dependent hemolysis as well as in a complement-independent manner. The hemolysis provoked in a complement-independent manner may be composed of several steps. The toxin may bind to erythrocyte membranes, may hydrolyze membrane phospholipids (SM and LPC) thus generating metabolism products that may cause hemolysis, probably by provoking an increase of calcium inside cells. The calcium influx may be due to the opening of L-type calcium channels, since L-type calcium channel blockers inhibit calcium influx. In Loxosceles intermedia (Brown spider), this protein is Dermonecrotic toxin LiSicTox-alphaII1.